We begin with the raw amino-acid sequence, 402 residues long: Enoyl-[acyl-carrier-protein] reductase [NADH] (402 aa).

NAD(+)-binding positions include 48–53 (GASSGY), 74–75 (FE), 111–112 (DA), and 140–141 (LA). Tyrosine 226 contacts substrate. Tyrosine 236 functions as the Proton donor in the catalytic mechanism. Residues lysine 245 and 274–276 (VVT) contribute to the NAD(+) site.

It belongs to the TER reductase family. Monomer.

It catalyses the reaction a 2,3-saturated acyl-[ACP] + NAD(+) = a (2E)-enoyl-[ACP] + NADH + H(+). It carries out the reaction a 2,3-saturated acyl-CoA + NAD(+) = a (2E)-enoyl-CoA + NADH + H(+). It participates in lipid metabolism; fatty acid biosynthesis. Functionally, involved in the final reduction of the elongation cycle of fatty acid synthesis (FAS II). Catalyzes the reduction of a carbon-carbon double bond in an enoyl moiety that is covalently linked to an acyl carrier protein (ACP). It can also use crotonyl-CoA. This Xanthomonas oryzae pv. oryzae (strain MAFF 311018) protein is Enoyl-[acyl-carrier-protein] reductase [NADH].